The primary structure comprises 118 residues: Large ribosomal subunit protein bL19 (118 aa).

Belongs to the bacterial ribosomal protein bL19 family.

Functionally, this protein is located at the 30S-50S ribosomal subunit interface and may play a role in the structure and function of the aminoacyl-tRNA binding site. The protein is Large ribosomal subunit protein bL19 of Salinibacter ruber (strain DSM 13855 / M31).